We begin with the raw amino-acid sequence, 120 residues long: Cell division protein FtsL (120 aa).

Positions 1-22 are disordered; it reads MSNVAYKSNLEPNRVHREAEQP. Over 1–37 the chain is Cytoplasmic; sequence MSNVAYKSNLEPNRVHREAEQPKKQILKRGQMTLGEK. The span at 13 to 22 shows a compositional bias: basic and acidic residues; the sequence is NRVHREAEQP. Residues 38–58 form a helical membrane-spanning segment; it reads VIITIALAIVLVVAFRIISVQ. At 59-120 the chain is on the extracellular side; it reads AQIYTVNQEI…GDNVKVVDGQ (62 aa).

Belongs to the FtsL family.

Its subcellular location is the cell membrane. In terms of biological role, essential cell division protein. The chain is Cell division protein FtsL from Listeria monocytogenes serovar 1/2a (strain ATCC BAA-679 / EGD-e).